Reading from the N-terminus, the 428-residue chain is D-amino acid dehydrogenase (428 aa).

3 to 17 (VVVLGSGVVGVASAY) serves as a coordination point for FAD.

Belongs to the DadA oxidoreductase family. The cofactor is FAD.

The enzyme catalyses a D-alpha-amino acid + A + H2O = a 2-oxocarboxylate + AH2 + NH4(+). It functions in the pathway amino-acid degradation; D-alanine degradation; NH(3) and pyruvate from D-alanine: step 1/1. Its function is as follows. Oxidative deamination of D-amino acids. This chain is D-amino acid dehydrogenase, found in Burkholderia ambifaria (strain MC40-6).